The sequence spans 476 residues: Cytoplasmic 60S subunit biogenesis factor ZNF622 (476 aa).

Alanine 2 carries the post-translational modification N-acetylalanine. 2 U1-type zinc fingers span residues leucine 4–histidine 28 and threonine 69–histidine 93. The interval alanine 137–proline 243 is disordered. Residues valine 167–proline 177 show a composition bias toward basic and acidic residues. Over residues glutamate 195–alanine 239 the composition is skewed to acidic residues. Residue serine 275 is modified to Phosphoserine.

This sequence belongs to the REI1 family. As to quaternary structure, homo- and heterodimer. Associates with pre-60S ribosomal particles. Interacts with MELK and MYBL2. Interacts with DNAJC21. Post-translationally, phosphorylated by MELK. The phosphorylation may redirect the protein to the nucleus. In terms of processing, ubiquitinated by HECTD1, leading to its degradation.

Its subcellular location is the cytoplasm. It is found in the nucleus. In terms of biological role, pre-60S-associated cytoplasmic factor involved in the cytoplasmic maturation of the 60S subunit. The protein is Cytoplasmic 60S subunit biogenesis factor ZNF622 (Znf622) of Mus musculus (Mouse).